A 400-amino-acid chain; its full sequence is Elongation factor Tu (400 aa).

Residues 10–210 (KPHCNVGTIG…VDTYIPIPPR (201 aa)) enclose the tr-type G domain. The G1 stretch occupies residues 19–26 (GHVDHGKT). A GTP-binding site is contributed by 19-26 (GHVDHGKT). Threonine 26 contributes to the Mg(2+) binding site. Positions 60–64 (GLTIA) are G2. The tract at residues 81–84 (DCPG) is G3. Residues 81–85 (DCPGH) and 136–139 (NKCD) each bind GTP. A G4 region spans residues 136 to 139 (NKCD). The tract at residues 174 to 176 (SAI) is G5.

This sequence belongs to the TRAFAC class translation factor GTPase superfamily. Classic translation factor GTPase family. EF-Tu/EF-1A subfamily. In terms of assembly, monomer.

The protein resides in the cytoplasm. It carries out the reaction GTP + H2O = GDP + phosphate + H(+). Its function is as follows. GTP hydrolase that promotes the GTP-dependent binding of aminoacyl-tRNA to the A-site of ribosomes during protein biosynthesis. This chain is Elongation factor Tu, found in Dehalococcoides mccartyi (strain CBDB1).